The following is a 117-amino-acid chain: uncharacterized protein (117 aa).

This is an uncharacterized protein from Schizosaccharomyces pombe (strain 972 / ATCC 24843) (Fission yeast).